Consider the following 350-residue polypeptide: Protein RecA (350 aa).

Residue 68 to 75 (GPESSGKT) participates in ATP binding.

It belongs to the RecA family.

It is found in the cytoplasm. Its function is as follows. Can catalyze the hydrolysis of ATP in the presence of single-stranded DNA, the ATP-dependent uptake of single-stranded DNA by duplex DNA, and the ATP-dependent hybridization of homologous single-stranded DNAs. It interacts with LexA causing its activation and leading to its autocatalytic cleavage. The sequence is that of Protein RecA from Mycolicibacterium vanbaalenii (strain DSM 7251 / JCM 13017 / BCRC 16820 / KCTC 9966 / NRRL B-24157 / PYR-1) (Mycobacterium vanbaalenii).